The primary structure comprises 128 residues: Large ribosomal subunit protein bL17 (128 aa).

Belongs to the bacterial ribosomal protein bL17 family. Part of the 50S ribosomal subunit. Contacts protein L32.

The chain is Large ribosomal subunit protein bL17 from Pseudomonas syringae pv. syringae (strain B728a).